We begin with the raw amino-acid sequence, 551 residues long: Chaperonin GroEL 4 (551 aa).

ATP contacts are provided by residues 30–33 (TLGP), Lys-51, 87–91 (DGTTT), Gly-415, and Asp-495.

It belongs to the chaperonin (HSP60) family. Forms a cylinder of 14 subunits composed of two heptameric rings stacked back-to-back. Interacts with the co-chaperonin GroES.

The protein localises to the cytoplasm. It catalyses the reaction ATP + H2O + a folded polypeptide = ADP + phosphate + an unfolded polypeptide.. Functionally, together with its co-chaperonin GroES, plays an essential role in assisting protein folding. The GroEL-GroES system forms a nano-cage that allows encapsulation of the non-native substrate proteins and provides a physical environment optimized to promote and accelerate protein folding. The chain is Chaperonin GroEL 4 from Mesorhizobium japonicum (strain LMG 29417 / CECT 9101 / MAFF 303099) (Mesorhizobium loti (strain MAFF 303099)).